The sequence spans 394 residues: Phosphopentomutase (394 aa).

Mn(2+)-binding residues include aspartate 13, aspartate 286, histidine 291, aspartate 327, histidine 328, and histidine 339.

Belongs to the phosphopentomutase family. Requires Mn(2+) as cofactor.

The protein resides in the cytoplasm. It catalyses the reaction 2-deoxy-alpha-D-ribose 1-phosphate = 2-deoxy-D-ribose 5-phosphate. It carries out the reaction alpha-D-ribose 1-phosphate = D-ribose 5-phosphate. It functions in the pathway carbohydrate degradation; 2-deoxy-D-ribose 1-phosphate degradation; D-glyceraldehyde 3-phosphate and acetaldehyde from 2-deoxy-alpha-D-ribose 1-phosphate: step 1/2. Its function is as follows. Isomerase that catalyzes the conversion of deoxy-ribose 1-phosphate (dRib-1-P) and ribose 1-phosphate (Rib-1-P) to deoxy-ribose 5-phosphate (dRib-5-P) and ribose 5-phosphate (Rib-5-P), respectively. The polypeptide is Phosphopentomutase (Bacillus cereus (strain ATCC 10987 / NRS 248)).